The following is a 456-amino-acid chain: Short chain dehydrogenase tazN (456 aa).

NADP(+) contacts are provided by Val-45, Asp-99, Asn-126, Arg-160, Tyr-195, Lys-199, and Thr-229. Tyr-195 serves as the catalytic Proton donor. Lys-199 (lowers pKa of active site Tyr) is an active-site residue.

Belongs to the short-chain dehydrogenases/reductases (SDR) family.

It participates in secondary metabolite biosynthesis. Short chain dehydrogenase; part of the gene cluster that mediates the biosynthesis of azaterrilone A and other azaphilones, a class of fungal metabolites characterized by a highly oxygenated pyrano-quinone bicyclic core and exhibiting a broad range of bioactivities. The first step of the pathway begins with the non-reducing polyketide synthase tazA that assembles one acetyl-CoA starter unit, five malonyl-CoA units, and catalyzes a series of Claisen condensations, methylation, PT-mediated cyclization, and finally releases the first hexaketide precursor through the R-domain. The tazA product then undergoes reduction on its terminal ketone and the following pyran-ring formation by yet undetermined enzyme(s). Dehydration and enoyl reduction, possibly involving the trans-enoyl reductase tazE leads to the next intermediate. TazD is predicted as an acetyltransferase and might catalyze the acetylation steps leading to the synthesis of azaterrilone A. Azaterrilone A is not the final product of the taz pathway and both the highly reducing polyketide synthase tazB and the dual enzyme tazHJ catalyze late steps of the pathway, leading to the production of the 2 final stereoisomers that contain additional polyketide modification whose structures have still to be determined. The sequence is that of Short chain dehydrogenase tazN from Aspergillus terreus (strain NIH 2624 / FGSC A1156).